Consider the following 135-residue polypeptide: MSDPRAKGGKGGAANAKNEPKKQTTQSARAGLQFPVGRIHRHLKSRTQNHVRIGAKAAVYTSAILEYLTAEVLELAGNASKDMRLKRITPRHLQLAIRGDEELDSMVRATIAGGGVLPHIHKTLIKAPSKKKALE.

Positions 1–33 are disordered; sequence MSDPRAKGGKGGAANAKNEPKKQTTQSARAGLQ. K10 bears the N6-acetyllysine mark.

Belongs to the histone H2A family. As to quaternary structure, the nucleosome is a histone octamer containing two molecules each of H2A, H2B, H3 and H4 assembled in one H3-H4 heterotetramer and two H2A-H2B heterodimers. The octamer wraps approximately 147 bp of DNA. H2A or its variant H2A.Z forms a heterodimer with H2B. H2A.Z associates with the VPS72/SWC2 subunit of the SWR1 chromatin remodeling complex. Also interacts with RBP1/DNA-directed RNA polymerase II largest subunit. Acetylated once deposited into chromatin.

It is found in the nucleus. It localises to the chromosome. In terms of biological role, variant histone H2A which can replace H2A in some nucleosomes. Nucleosomes wrap and compact DNA into chromatin, limiting DNA accessibility to the cellular machineries which require DNA as a template. Histones thereby play a central role in transcription regulation, DNA repair, DNA replication and chromosomal stability. DNA accessibility is regulated via a complex set of post-translational modifications of histones, also called histone code, and nucleosome remodeling. This variant is enriched at promoters, it may keep them in a repressed state until the appropriate activation signal is received. Near telomeres, it may counteract gene silencing caused by the spread of heterochromatin proteins. Required for the RNA polymerase II and SPT15/TBP recruitment to the target genes. Involved in chromosome stability. This chain is Histone H2A.Z (HTZ1), found in Mycosarcoma maydis (Corn smut fungus).